The sequence spans 536 residues: C-22 sterol desaturase ERG5A (536 aa).

The helical transmembrane segment at 41–61 (VWTWVFTLVALCIAYDQIAYI) threads the bilayer. Cysteine 481 provides a ligand contact to heme.

It belongs to the cytochrome P450 family. Heme serves as cofactor.

Its subcellular location is the endoplasmic reticulum membrane. The enzyme catalyses 5-dehydroepisterol + NADPH + O2 + H(+) = ergosta-5,7,22,24(28)-tetraen-3beta-ol + NADP(+) + 2 H2O. The protein operates within steroid metabolism; ergosterol biosynthesis. C-22 sterol desaturase; part of the third module of ergosterol biosynthesis pathway that includes the late steps of the pathway. ERG5A and ERG5B convert 5-dehydroepisterol into ergosta-5,7,22,24(28)-tetraen-3beta-ol by forming the C-22(23) double bond in the sterol side chain. The third module or late pathway involves the ergosterol synthesis itself through consecutive reactions that mainly occur in the endoplasmic reticulum (ER) membrane. Firstly, the squalene synthase ERG9 catalyzes the condensation of 2 farnesyl pyrophosphate moieties to form squalene, which is the precursor of all steroids. Squalene synthase is crucial for balancing the incorporation of farnesyl diphosphate (FPP) into sterol and nonsterol isoprene synthesis. Secondly, squalene is converted into lanosterol by the consecutive action of the squalene epoxidase ERG1 and the lanosterol synthase ERG7. Then, the delta(24)-sterol C-methyltransferase ERG6 methylates lanosterol at C-24 to produce eburicol. Eburicol is the substrate of the sterol 14-alpha demethylase encoded by CYP51A, CYP51B and CYP51C, to yield 4,4,24-trimethyl ergosta-8,14,24(28)-trienol. CYP51B encodes the enzyme primarily responsible for sterol 14-alpha-demethylation, and plays an essential role in ascospore formation. CYP51A encodes an additional sterol 14-alpha-demethylase, induced on ergosterol depletion and responsible for the intrinsic variation in azole sensitivity. The third CYP51 isoform, CYP51C, does not encode a sterol 14-alpha-demethylase, but is required for full virulence on host wheat ears. The C-14 reductase ERG24 then reduces the C14=C15 double bond which leads to 4,4-dimethylfecosterol. A sequence of further demethylations at C-4, involving the C-4 demethylation complex containing the C-4 methylsterol oxidases ERG25, the sterol-4-alpha-carboxylate 3-dehydrogenase ERG26 and the 3-keto-steroid reductase ERG27, leads to the production of fecosterol via 4-methylfecosterol. ERG28 has a role as a scaffold to help anchor ERG25, ERG26 and ERG27 to the endoplasmic reticulum. The C-8 sterol isomerase ERG2 then catalyzes the reaction which results in unsaturation at C-7 in the B ring of sterols and thus converts fecosterol to episterol. The sterol-C5-desaturases ERG3A and ERG3BB then catalyze the introduction of a C-5 double bond in the B ring to produce 5-dehydroepisterol. The C-22 sterol desaturases ERG5A and ERG5B further convert 5-dehydroepisterol into ergosta-5,7,22,24(28)-tetraen-3beta-ol by forming the C-22(23) double bond in the sterol side chain. Finally, ergosta-5,7,22,24(28)-tetraen-3beta-ol is substrate of the C-24(28) sterol reductase ERG4 to produce ergosterol. This chain is C-22 sterol desaturase ERG5A, found in Gibberella zeae (strain ATCC MYA-4620 / CBS 123657 / FGSC 9075 / NRRL 31084 / PH-1) (Wheat head blight fungus).